A 287-amino-acid polypeptide reads, in one-letter code: 4-hydroxybenzoate octaprenyltransferase (287 aa).

Transmembrane regions (helical) follow at residues isoleucine 23–alanine 43, glycine 46–isoleucine 66, leucine 99–isoleucine 119, leucine 141–valine 161, glycine 162–alanine 182, leucine 213–asparagine 233, glycine 237–isoleucine 257, and phenylalanine 266–alanine 286.

It belongs to the UbiA prenyltransferase family. Mg(2+) is required as a cofactor.

It localises to the cell inner membrane. The enzyme catalyses all-trans-octaprenyl diphosphate + 4-hydroxybenzoate = 4-hydroxy-3-(all-trans-octaprenyl)benzoate + diphosphate. It functions in the pathway cofactor biosynthesis; ubiquinone biosynthesis. Catalyzes the prenylation of para-hydroxybenzoate (PHB) with an all-trans polyprenyl group. Mediates the second step in the final reaction sequence of ubiquinone-8 (UQ-8) biosynthesis, which is the condensation of the polyisoprenoid side chain with PHB, generating the first membrane-bound Q intermediate 3-octaprenyl-4-hydroxybenzoate. In Edwardsiella ictaluri (strain 93-146), this protein is 4-hydroxybenzoate octaprenyltransferase.